We begin with the raw amino-acid sequence, 277 residues long: Translation initiation factor 2 subunit alpha (277 aa).

Residues 22-93 (GEIVVGTVQE…KRGQVDVSLK (72 aa)) enclose the S1 motif domain.

This sequence belongs to the eIF-2-alpha family. In terms of assembly, heterotrimer composed of an alpha, a beta and a gamma chain.

In terms of biological role, eIF-2 functions in the early steps of protein synthesis by forming a ternary complex with GTP and initiator tRNA. The sequence is that of Translation initiation factor 2 subunit alpha (eif2a) from Aeropyrum pernix (strain ATCC 700893 / DSM 11879 / JCM 9820 / NBRC 100138 / K1).